A 346-amino-acid polypeptide reads, in one-letter code: Probable electron transfer flavoprotein subunit alpha, mitochondrial (346 aa).

Position 285–313 (285–313) interacts with FAD; it reads LYVAIGISGAIQHLAGMKESKMIIAINKD.

It belongs to the ETF alpha-subunit/FixB family. Heterodimer of an alpha and a beta subunit. It depends on FAD as a cofactor.

The protein localises to the mitochondrion matrix. Functionally, the electron transfer flavoprotein serves as a specific electron acceptor for several dehydrogenases, including five acyl-CoA dehydrogenases, glutaryl-CoA and sarcosine dehydrogenase. It transfers the electrons to the main mitochondrial respiratory chain via ETF-ubiquinone oxidoreductase (ETF dehydrogenase). This chain is Probable electron transfer flavoprotein subunit alpha, mitochondrial (ETF1), found in Cryptococcus gattii serotype B (strain WM276 / ATCC MYA-4071) (Filobasidiella gattii).